We begin with the raw amino-acid sequence, 638 residues long: NBPF family member NBPF4 (638 aa).

Coiled coils occupy residues 10–43 and 69–115; these read SERA…EKFL and DSVL…KLRE. Positions 157-285 are disordered; the sequence is HLVHKLSPEN…VPPRHHDKSN (129 aa). A compositionally biased stretch (acidic residues) spans 165–179; sequence ENDEDEDEDEDDKDE. The region spanning 174–261 is the Olduvai 1 domain; it reads EDDKDEEVEK…EEEEALNIPP (88 aa). A compositionally biased stretch (basic and acidic residues) spans 192–202; the sequence is EVQKTEEKEVP. The span at 214–226 shows a compositional bias: low complexity; the sequence is SNSHNPSNSNQPH. Basic and acidic residues-rich tracts occupy residues 232–251 and 264–273; these read TFKE…HPHD and QNDHEEEEGK. Olduvai domains lie at 326–399 and 400–503; these read EKQS…ALVD and KIKK…SQAQ. Residues 562–584 form a disordered region; the sequence is GMKNPPQLEDDALEGSASNTQGR.

It belongs to the NBPF family. As to expression, expressed in testis.

Its subcellular location is the cytoplasm. The protein is NBPF family member NBPF4 of Homo sapiens (Human).